The sequence spans 1807 residues: Vitellogenin-A2 (1807 aa).

A signal peptide spans 1–15 (MKGIVLALLLALAGS). Residues 24–664 (FSESKISVYN…SANTMFPVFI (641 aa)) enclose the Vitellogenin domain. A disordered region spans residues 953-974 (TSAEGASMMEDSSEMGPKKYSA). Asparagine 1094 carries an N-linked (GlcNAc...) asparagine glycan. A disordered region spans residues 1095–1320 (ETALYRSKQK…SSESSSSSSE (226 aa)). Residues 1101–1111 (SKQKKKNKIHN) are compositionally biased toward basic residues. Residues 1112 to 1123 (RRLDAEVVEARK) are compositionally biased toward basic and acidic residues. Residues 1126–1163 (SSLSSSSSSSSSSSSSSSSSSSSSSSSSPSSSSSSSYS) are compositionally biased toward low complexity. A compositionally biased stretch (basic and acidic residues) spans 1187-1198 (QNKKRNLQENRK). A compositionally biased stretch (low complexity) spans 1205-1232 (SSSSSSSSSSSSSSSSSSSSSSSSSSSS). A compositionally biased stretch (basic and acidic residues) spans 1233–1247 (EENRPHKNRQHDNKQ). Composition is skewed to low complexity over residues 1263-1276 (SESS…SSSE) and 1309-1320 (SSSSESSSSSSE). Positions 1536 to 1714 (GECKVAQDQI…SWILPAESCS (179 aa)) constitute a VWFD domain. Disulfide bonds link cysteine 1538–cysteine 1677 and cysteine 1561–cysteine 1713.

Produced by the liver, secreted into the blood and then sequestered by receptor mediated endocytosis into growing oocytes, where it is generally cleaved, giving rise to the respective yolk components.

In terms of biological role, precursor of the major egg-yolk proteins that are sources of nutrients during early development of oviparous organisms. The sequence is that of Vitellogenin-A2 from Xenopus laevis (African clawed frog).